We begin with the raw amino-acid sequence, 165 residues long: NADH-quinone oxidoreductase subunit I (165 aa).

4Fe-4S ferredoxin-type domains lie at 57-86 and 96-125; these read RRYENGEERCIACKLCEAVCPALAITIESE and TRYDIDLTKCIFCGFCEESCPVDSIVETHI. [4Fe-4S] cluster is bound by residues Cys-66, Cys-69, Cys-72, Cys-76, Cys-105, Cys-108, Cys-111, and Cys-115.

Belongs to the complex I 23 kDa subunit family. As to quaternary structure, NDH-1 is composed of 14 different subunits. Subunits NuoA, H, J, K, L, M, N constitute the membrane sector of the complex. The cofactor is [4Fe-4S] cluster.

It is found in the cell inner membrane. It catalyses the reaction a quinone + NADH + 5 H(+)(in) = a quinol + NAD(+) + 4 H(+)(out). Functionally, NDH-1 shuttles electrons from NADH, via FMN and iron-sulfur (Fe-S) centers, to quinones in the respiratory chain. The immediate electron acceptor for the enzyme in this species is believed to be ubiquinone. Couples the redox reaction to proton translocation (for every two electrons transferred, four hydrogen ions are translocated across the cytoplasmic membrane), and thus conserves the redox energy in a proton gradient. This is NADH-quinone oxidoreductase subunit I from Methylibium petroleiphilum (strain ATCC BAA-1232 / LMG 22953 / PM1).